Here is a 311-residue protein sequence, read N- to C-terminus: Thioredoxin reductase (311 aa).

FAD is bound at residue glutamate 35–glutamine 42. A disulfide bridge connects residues cysteine 134 and cysteine 137. Aspartate 277–isoleucine 286 provides a ligand contact to FAD.

This sequence belongs to the class-II pyridine nucleotide-disulfide oxidoreductase family. As to quaternary structure, homodimer. FAD is required as a cofactor.

The protein localises to the cytoplasm. The enzyme catalyses [thioredoxin]-dithiol + NADP(+) = [thioredoxin]-disulfide + NADPH + H(+). The protein is Thioredoxin reductase (trxB) of Staphylococcus aureus (strain COL).